A 160-amino-acid chain; its full sequence is Troponin C, skeletal muscle (160 aa).

Position 2 is an N-acetylthreonine (T2). EF-hand domains lie at 15–50 (EMIAEFKAAFDMFDADGGGDISVKELGTVMRMLGQT), 51–86 (PTKEELDAIIEEVDEDGSGTIDFEEFLVMMVRQMKE), 91–126 (KSEEELAECFRIFDRNADGYIDAEELAEIFRASGEH), and 127–160 (VTEEEIESLMKDGDKNNDGRIDFDEFLKMMEGVQ). Ca(2+) contacts are provided by D28, D30, D34, E39, D64, D66, S68, T70, E75, D104, N106, D108, Y110, E115, D140, N142, D144, R146, and E151.

It belongs to the troponin C family. In terms of tissue distribution, fast skeletal muscle.

Troponin is the central regulatory protein of striated muscle contraction. Tn consists of three components: Tn-I which is the inhibitor of actomyosin ATPase, Tn-T which contains the binding site for tropomyosin and Tn-C. The binding of calcium to Tn-C abolishes the inhibitory action of Tn on actin filaments. This chain is Troponin C, skeletal muscle (Tnnc2), found in Mus musculus (Mouse).